An 829-amino-acid polypeptide reads, in one-letter code: Ent-cassa-12,15-diene synthase (829 aa).

The interval 1-50 (MMLLGSPSSGGYGGKFAGASPAGGTTTMAPSAKQPSSRAPPPGITGGRND) is disordered. Over residues 23 to 37 (GGTTTMAPSAKQPSS) the composition is skewed to polar residues. Mg(2+)-binding residues include Asp576, Asp580, Asn720, and Glu728. Residues 576–580 (DDLFD) carry the DDXXD motif motif.

Belongs to the terpene synthase family. The cofactor is Mg(2+). In terms of tissue distribution, expressed in roots and stems.

The enzyme catalyses ent-copalyl diphosphate = ent-cassa-12,15-diene + diphosphate. Involved in phytocassane phytoalexins biosynthesis. Catalyzes the conversion of ent-copalyl diphosphate to the phytoalexin precursor ent-cassa-12,15-diene. The polypeptide is Ent-cassa-12,15-diene synthase (KSL7) (Oryza sativa subsp. japonica (Rice)).